The sequence spans 166 residues: Cytochrome c-type biogenesis protein CcmE (166 aa).

At 1-7 (MTRKQKR) the chain is on the cytoplasmic side. A helical; Signal-anchor for type II membrane protein transmembrane segment spans residues 8–28 (LALIASGAVVVSLAVGLVMFA). Residues 29–166 (LRDNIVFFYS…QTAPQGAQAY (138 aa)) are Periplasmic-facing. Heme contacts are provided by H122 and Y126. The tract at residues 139-166 (GVWQEEGKSEGKPSAIPAQTAPQGAQAY) is disordered.

This sequence belongs to the CcmE/CycJ family.

It is found in the cell inner membrane. Functionally, heme chaperone required for the biogenesis of c-type cytochromes. Transiently binds heme delivered by CcmC and transfers the heme to apo-cytochromes in a process facilitated by CcmF and CcmH. The polypeptide is Cytochrome c-type biogenesis protein CcmE (Methylocella silvestris (strain DSM 15510 / CIP 108128 / LMG 27833 / NCIMB 13906 / BL2)).